The chain runs to 841 residues: Envelope glycoprotein H (841 aa).

The N-terminal stretch at 1 to 17 (MFALVLAVVILPLWTTA) is a signal peptide. Asn-18, Asn-45, and Asn-217 each carry an N-linked (GlcNAc...) asparagine; by host glycan. At 18–802 (NKSYVTPTPA…ERRQAIRMSG (785 aa)) the chain is on the virion surface side. The interaction with gL stretch occupies residues 246 to 309 (DSGRVEVNIG…DPGPSYRVYL (64 aa)). N-linked (GlcNAc...) asparagine; by host glycans are attached at residues Asn-317, Asn-499, Asn-522, Asn-760, and Asn-783. Residues 803 to 823 (QYLGASLGGAFLAVVGFGIIG) form a helical membrane-spanning segment. Over 824 to 841 (WMLCGNSRLREYNKIPLT) the chain is Intravirion.

This sequence belongs to the herpesviridae glycoprotein H family. As to quaternary structure, interacts with glycoprotein L (gL); this interaction is necessary for the correct processing and cell surface expression of gH. The heterodimer gH/gL seems to interact with gB trimers during fusion. Post-translationally, N-glycosylated, O-glycosylated, and sialylated.

The protein localises to the virion membrane. It is found in the host cell membrane. The protein resides in the host endosome membrane. In terms of biological role, the heterodimer glycoprotein H-glycoprotein L is required for the fusion of viral and plasma membranes leading to virus entry into the host cell. Following initial binding to host receptor, membrane fusion is mediated by the fusion machinery composed of gB and the heterodimer gH/gL. May also be involved in the fusion between the virion envelope and the outer nuclear membrane during virion morphogenesis. This chain is Envelope glycoprotein H, found in Varicella-zoster virus (strain Dumas) (HHV-3).